A 654-amino-acid chain; its full sequence is Threonine--tRNA ligase (654 aa).

The TGS domain maps to Met1–Thr63. Residues Asp247–Pro544 form a catalytic region. 3 residues coordinate Zn(2+): Cys344, His395, and His521.

The protein belongs to the class-II aminoacyl-tRNA synthetase family. Homodimer. It depends on Zn(2+) as a cofactor.

It localises to the cytoplasm. It catalyses the reaction tRNA(Thr) + L-threonine + ATP = L-threonyl-tRNA(Thr) + AMP + diphosphate + H(+). Functionally, catalyzes the attachment of threonine to tRNA(Thr) in a two-step reaction: L-threonine is first activated by ATP to form Thr-AMP and then transferred to the acceptor end of tRNA(Thr). Also edits incorrectly charged L-seryl-tRNA(Thr). This Dinoroseobacter shibae (strain DSM 16493 / NCIMB 14021 / DFL 12) protein is Threonine--tRNA ligase.